The sequence spans 167 residues: Small heat shock protein C1 (167 aa).

The region spanning 59–167 (PFYESNSIKS…EQDAKEIPIN (109 aa)) is the sHSP domain.

This sequence belongs to the small heat shock protein (HSP20) family.

The sequence is that of Small heat shock protein C1 (hspC1) from Rickettsia bellii (strain RML369-C).